The chain runs to 413 residues: Tyrosine--tRNA ligase (413 aa).

Position 33 (Tyr-33) interacts with L-tyrosine. The 'HIGH' region motif lies at 38 to 47; sequence PTADSLHVGH. L-tyrosine is bound by residues Tyr-162 and Gln-166. The 'KMSKS' region motif lies at 225 to 229; that stretch reads KFGKT. Lys-228 provides a ligand contact to ATP. In terms of domain architecture, S4 RNA-binding spans 346-413; that stretch reads TSAIDAIVNV…KKKYYLLEIK (68 aa).

It belongs to the class-I aminoacyl-tRNA synthetase family. TyrS type 1 subfamily. In terms of assembly, homodimer.

The protein resides in the cytoplasm. The catalysed reaction is tRNA(Tyr) + L-tyrosine + ATP = L-tyrosyl-tRNA(Tyr) + AMP + diphosphate + H(+). Catalyzes the attachment of tyrosine to tRNA(Tyr) in a two-step reaction: tyrosine is first activated by ATP to form Tyr-AMP and then transferred to the acceptor end of tRNA(Tyr). The protein is Tyrosine--tRNA ligase of Mesoplasma florum (strain ATCC 33453 / NBRC 100688 / NCTC 11704 / L1) (Acholeplasma florum).